Here is a 451-residue protein sequence, read N- to C-terminus: D-aminoacyl-tRNA deacylase (451 aa).

The tract at residues 410–437 (RTADIPEGPKFGKLASGESVEIDGEEID) is disordered.

Belongs to the DtdA deacylase family. Monomer. Zn(2+) is required as a cofactor.

The catalysed reaction is a D-aminoacyl-tRNA + H2O = a tRNA + a D-alpha-amino acid + H(+). It catalyses the reaction glycyl-tRNA(Ala) + H2O = tRNA(Ala) + glycine + H(+). D-aminoacyl-tRNA deacylase with broad substrate specificity. By recycling D-aminoacyl-tRNA to D-amino acids and free tRNA molecules, this enzyme counteracts the toxicity associated with the formation of D-aminoacyl-tRNA entities in vivo. This is D-aminoacyl-tRNA deacylase from Haloarcula marismortui (strain ATCC 43049 / DSM 3752 / JCM 8966 / VKM B-1809) (Halobacterium marismortui).